The chain runs to 632 residues: Mitoguardin 1 (632 aa).

The helical transmembrane segment at 70–90 threads the bilayer; it reads PVAKKLFVVTAVSAISVIFLA. 2 positions are modified to phosphoserine: S289 and S293.

The protein belongs to the mitoguardin family. In terms of assembly, homodimer and heterodimer; forms heterodimers with MIGA2. Interacts with PLD6/MitoPLD.

The protein localises to the mitochondrion outer membrane. Its function is as follows. Regulator of mitochondrial fusion: acts by forming homo- and heterodimers at the mitochondrial outer membrane and facilitating the formation of PLD6/MitoPLD dimers. May act by regulating phospholipid metabolism via PLD6/MitoPLD. The sequence is that of Mitoguardin 1 from Homo sapiens (Human).